Here is a 252-residue protein sequence, read N- to C-terminus: Imidazole glycerol phosphate synthase subunit HisF (252 aa).

Residues aspartate 11 and aspartate 130 contribute to the active site.

It belongs to the HisA/HisF family. Heterodimer of HisH and HisF.

The protein localises to the cytoplasm. The enzyme catalyses 5-[(5-phospho-1-deoxy-D-ribulos-1-ylimino)methylamino]-1-(5-phospho-beta-D-ribosyl)imidazole-4-carboxamide + L-glutamine = D-erythro-1-(imidazol-4-yl)glycerol 3-phosphate + 5-amino-1-(5-phospho-beta-D-ribosyl)imidazole-4-carboxamide + L-glutamate + H(+). Its pathway is amino-acid biosynthesis; L-histidine biosynthesis; L-histidine from 5-phospho-alpha-D-ribose 1-diphosphate: step 5/9. In terms of biological role, IGPS catalyzes the conversion of PRFAR and glutamine to IGP, AICAR and glutamate. The HisF subunit catalyzes the cyclization activity that produces IGP and AICAR from PRFAR using the ammonia provided by the HisH subunit. This Pelotomaculum thermopropionicum (strain DSM 13744 / JCM 10971 / SI) protein is Imidazole glycerol phosphate synthase subunit HisF.